Consider the following 344-residue polypeptide: L-rhamnose-proton symporter (344 aa).

A run of 10 helical transmembrane segments spans residues A4 to A24, W38 to L58, F68 to I88, M101 to I121, T137 to L157, L175 to A195, L214 to I234, V259 to G279, I290 to L310, and V323 to A343.

Belongs to the L-rhamnose transporter (TC 2.A.7.6) family.

Its subcellular location is the cell inner membrane. It carries out the reaction L-rhamnopyranose(in) + H(+)(in) = L-rhamnopyranose(out) + H(+)(out). Uptake of L-rhamnose across the cytoplasmic membrane with the concomitant transport of protons into the cell (symport system). In Escherichia coli O17:K52:H18 (strain UMN026 / ExPEC), this protein is L-rhamnose-proton symporter.